A 205-amino-acid polypeptide reads, in one-letter code: Large ribosomal subunit protein uL4 (205 aa).

This sequence belongs to the universal ribosomal protein uL4 family. Part of the 50S ribosomal subunit.

One of the primary rRNA binding proteins, this protein initially binds near the 5'-end of the 23S rRNA. It is important during the early stages of 50S assembly. It makes multiple contacts with different domains of the 23S rRNA in the assembled 50S subunit and ribosome. In terms of biological role, forms part of the polypeptide exit tunnel. The polypeptide is Large ribosomal subunit protein uL4 (Ruegeria sp. (strain TM1040) (Silicibacter sp.)).